The following is a 314-amino-acid chain: Electron transfer flavoprotein subunit alpha (314 aa).

253–281 serves as a coordination point for FAD; it reads LYVAVGISGAIQHLAGMKDSKVIVAINKD.

The protein belongs to the ETF alpha-subunit/FixB family. In terms of assembly, heterodimer of an alpha and a beta subunit. FAD is required as a cofactor.

In terms of biological role, the electron transfer flavoprotein serves as a specific electron acceptor for other dehydrogenases. It transfers the electrons to the main respiratory chain via ETF-ubiquinone oxidoreductase (ETF dehydrogenase). This is Electron transfer flavoprotein subunit alpha (etfA) from Bradyrhizobium diazoefficiens (strain JCM 10833 / BCRC 13528 / IAM 13628 / NBRC 14792 / USDA 110).